A 213-amino-acid polypeptide reads, in one-letter code: Pyridoxine/pyridoxamine 5'-phosphate oxidase (213 aa).

Residues 8–11 (RREY) and lysine 66 each bind substrate. FMN contacts are provided by residues 61 to 66 (RIVLLK), 76 to 77 (YT), arginine 82, lysine 83, and glutamine 105. Residues tyrosine 123, arginine 127, and serine 131 each coordinate substrate. FMN-binding positions include 140–141 (QS) and tryptophan 185. 191–193 (RLH) contributes to the substrate binding site. An FMN-binding site is contributed by arginine 195.

This sequence belongs to the pyridoxamine 5'-phosphate oxidase family. In terms of assembly, homodimer. It depends on FMN as a cofactor.

The catalysed reaction is pyridoxamine 5'-phosphate + O2 + H2O = pyridoxal 5'-phosphate + H2O2 + NH4(+). The enzyme catalyses pyridoxine 5'-phosphate + O2 = pyridoxal 5'-phosphate + H2O2. It functions in the pathway cofactor metabolism; pyridoxal 5'-phosphate salvage; pyridoxal 5'-phosphate from pyridoxamine 5'-phosphate: step 1/1. The protein operates within cofactor metabolism; pyridoxal 5'-phosphate salvage; pyridoxal 5'-phosphate from pyridoxine 5'-phosphate: step 1/1. Functionally, catalyzes the oxidation of either pyridoxine 5'-phosphate (PNP) or pyridoxamine 5'-phosphate (PMP) into pyridoxal 5'-phosphate (PLP). The protein is Pyridoxine/pyridoxamine 5'-phosphate oxidase of Pseudoalteromonas atlantica (strain T6c / ATCC BAA-1087).